A 779-amino-acid polypeptide reads, in one-letter code: Probable ATP-dependent RNA helicase DHX40 (779 aa).

The segment at Met-1 to Phe-53 is disordered. Over residues Arg-13–Gly-41 the composition is skewed to basic and acidic residues. The segment covering Cys-42–Phe-53 has biased composition (polar residues). The region spanning Ile-63–Pro-231 is the Helicase ATP-binding domain. An ATP-binding site is contributed by Gly-76 to Thr-83. The DEAH box signature appears at Asp-173 to His-176. One can recognise a Helicase C-terminal domain in the interval Thr-263–Ala-442.

It belongs to the DEAD box helicase family. DEAH subfamily.

It carries out the reaction ATP + H2O = ADP + phosphate + H(+). Its function is as follows. Probable ATP-dependent RNA helicase. This Rattus norvegicus (Rat) protein is Probable ATP-dependent RNA helicase DHX40 (Dhx40).